The following is a 1613-amino-acid chain: Myosin-IIIa (1613 aa).

The Protein kinase domain occupies 21–287; the sequence is WEIIETIGKG…VSDLLKHKFI (267 aa). Residues 27-35 and lysine 50 contribute to the ATP site; that span reads IGKGTYGKV. The active-site Proton acceptor is the aspartate 150. Residues 338 to 1052 form the Myosin motor domain; it reads KDVDDLATLD…HVEQLNLMRK (715 aa). Positions 933–955 are actin-binding; that stretch reads LMDLLSKMVVGQPHFVRCIKPNN. IQ domains follow at residues 1054 to 1083 and 1081 to 1110; these read ATNK…KRKS and RKSS…MKNT. 2 disordered regions span residues 1136–1168 and 1476–1506; these read VKKQ…TAPF and SGVS…EDST. Residues 1145 to 1161 are compositionally biased toward low complexity; sequence PTNESNTSTPNNKESPS. The interaction with MORN4 stretch occupies residues 1398-1476; sequence EGVHHSKMVD…RHVSTHQYLS (79 aa). The segment covering 1488–1497 has biased composition (basic residues); sequence RPPRRPRKPK.

This sequence in the C-terminal section; belongs to the TRAFAC class myosin-kinesin ATPase superfamily. Myosin family. It in the N-terminal section; belongs to the protein kinase superfamily. STE Ser/Thr protein kinase family. Interacts with MORN4. Interacts (via C-terminus) with ESPN and ESPNL. Expressed in the cochlear hair cells (at protein level). Expressed in utricle hair bundles (at protein level).

It localises to the cytoplasm. The protein localises to the cytoskeleton. Its subcellular location is the cell projection. It is found in the filopodium tip. The protein resides in the stereocilium. It carries out the reaction L-seryl-[protein] + ATP = O-phospho-L-seryl-[protein] + ADP + H(+). The enzyme catalyses L-threonyl-[protein] + ATP = O-phospho-L-threonyl-[protein] + ADP + H(+). The catalysed reaction is ATP + H2O = ADP + phosphate + H(+). Functionally, actin-dependent motor protein with a protein kinase activity, playing an essential role in hearing. Probably plays also a role in vision. Required for normal cochlear hair bundle development and hearing. Plays an important role in the early steps of cochlear hair bundle morphogenesis. Influences the number and lengths of stereocilia to be produced and limits the growth of microvilli within the forming auditory hair bundles thereby contributing to the architecture of the hair bundle, including its staircase pattern. Involved in the elongation of actin in stereocilia tips by transporting the actin regulatory factor ESPN to the plus ends of actin filaments. The sequence is that of Myosin-IIIa (Myo3a) from Mus musculus (Mouse).